Reading from the N-terminus, the 154-residue chain is PTS system fructose-specific EIIA component (154 aa).

In terms of domain architecture, PTS EIIA type-2 spans 8 to 152 (TITPLELISL…QTVQDVLAEV (145 aa)). His70 (tele-phosphohistidine intermediate) is an active-site residue. Position 70 is a phosphohistidine; by HPr (His70).

It is found in the cytoplasm. Its function is as follows. The phosphoenolpyruvate-dependent sugar phosphotransferase system (sugar PTS), a major carbohydrate active transport system, catalyzes the phosphorylation of incoming sugar substrates concomitantly with their translocation across the cell membrane. The enzyme II PtfABC PTS system is involved in fructose transport. The chain is PTS system fructose-specific EIIA component from Haloferax volcanii (strain ATCC 29605 / DSM 3757 / JCM 8879 / NBRC 14742 / NCIMB 2012 / VKM B-1768 / DS2) (Halobacterium volcanii).